The chain runs to 369 residues: uncharacterized protein (369 aa).

Residues 110-121 (ARPTDAFGAPIA) are compositionally biased toward low complexity. Positions 110–172 (ARPTDAFGAP…PPPPASGGGA (63 aa)) are disordered. A compositionally biased stretch (pro residues) spans 122-136 (PSEPTPASAPSPPKA).

This is an uncharacterized protein from Lymantria dispar multicapsid nuclear polyhedrosis virus (LdMNPV).